The chain runs to 498 residues: Glycerol kinase (498 aa).

Threonine 11 is an ADP binding site. ATP contacts are provided by threonine 11, serine 12, and serine 13. Threonine 11 lines the sn-glycerol 3-phosphate pocket. Position 15 (arginine 15) interacts with ADP. Arginine 81, glutamate 82, tyrosine 133, and aspartate 242 together coordinate sn-glycerol 3-phosphate. Arginine 81, glutamate 82, tyrosine 133, aspartate 242, and glutamine 243 together coordinate glycerol. ADP is bound by residues threonine 264 and glycine 307. Threonine 264, glycine 307, glutamine 311, and glycine 412 together coordinate ATP. The ADP site is built by glycine 412 and asparagine 416.

The protein belongs to the FGGY kinase family.

The catalysed reaction is glycerol + ATP = sn-glycerol 3-phosphate + ADP + H(+). Its pathway is polyol metabolism; glycerol degradation via glycerol kinase pathway; sn-glycerol 3-phosphate from glycerol: step 1/1. With respect to regulation, inhibited by fructose 1,6-bisphosphate (FBP). Functionally, key enzyme in the regulation of glycerol uptake and metabolism. Catalyzes the phosphorylation of glycerol to yield sn-glycerol 3-phosphate. The polypeptide is Glycerol kinase (Delftia acidovorans (strain DSM 14801 / SPH-1)).